The chain runs to 359 residues: Ornithine cyclodeaminase (359 aa).

L-ornithine is bound by residues R53 and K77. NAD(+) is bound by residues T92, R120, 147–148, D169, T209, 232–235, K239, and S300; these read AQ and VGGD. R120 contributes to the L-ornithine binding site. An L-ornithine-binding site is contributed by D235. D235 functions as the Proton donor/acceptor in the catalytic mechanism. An L-ornithine-binding site is contributed by V301.

This sequence belongs to the ornithine cyclodeaminase/mu-crystallin family. NAD(+) serves as cofactor.

It carries out the reaction L-ornithine = L-proline + NH4(+). It participates in amino-acid biosynthesis; L-proline biosynthesis; L-proline from L-ornithine: step 1/1. Its function is as follows. Catalyzes the conversion of L-ornithine into L-proline with release of ammonia. This is Ornithine cyclodeaminase from Brucella melitensis biotype 1 (strain ATCC 23456 / CCUG 17765 / NCTC 10094 / 16M).